The chain runs to 243 residues: MLVMPAIDLREGRCVRLYQGRIEAETVYSTDPVAVARGWVERGARWLHVVDLDGAFAGRPRNLEVIAAIIRAAGVPVQVGGGIRSLESLAGVLAAGASRVVLGTVAITNPEVVATAVERYGERVVVGIDSLDGQVAIEGWEATVARGAVEFARQMASLGVTRAVFTDIGRDGTLQGPNIAATREMARSGGLKIIASGGIASLDDLRKLKELAAEGVEGAILGRSLYNGNFTLEEALAVAADGD.

Aspartate 8 functions as the Proton acceptor in the catalytic mechanism. The Proton donor role is filled by aspartate 129.

It belongs to the HisA/HisF family.

It localises to the cytoplasm. The catalysed reaction is 1-(5-phospho-beta-D-ribosyl)-5-[(5-phospho-beta-D-ribosylamino)methylideneamino]imidazole-4-carboxamide = 5-[(5-phospho-1-deoxy-D-ribulos-1-ylimino)methylamino]-1-(5-phospho-beta-D-ribosyl)imidazole-4-carboxamide. It participates in amino-acid biosynthesis; L-histidine biosynthesis; L-histidine from 5-phospho-alpha-D-ribose 1-diphosphate: step 4/9. The chain is 1-(5-phosphoribosyl)-5-[(5-phosphoribosylamino)methylideneamino] imidazole-4-carboxamide isomerase from Moorella thermoacetica (strain ATCC 39073 / JCM 9320).